The primary structure comprises 266 residues: MAAAGRLEDSSLDILQSMDDDPLLDTQPLPHHSLQAQFRPRFHPLPTVIIANLLLLIHVVFVVLAFLTGVPCLYPNPTEDKCPENYTSPLKVQTAIILGKLILWILHLLFERYVQYHHRKVRSRGYSQIYRSTRHLKTLALTIHSSGNTALLLLLCVQHSFPEPSKLYLELILAVLALELICSLSCLILYIVKIRRFNRAKPLPDVLEEEKIYAYPSNTASETGFRTVSSLEEIVEKQEDIIVYLKRHNALLSKRLLELATQPART.

The Cytoplasmic portion of the chain corresponds to 1 to 46 (MAAAGRLEDSSLDILQSMDDDPLLDTQPLPHHSLQAQFRPRFHPLP). Ser17 is modified (phosphoserine). Residues 47-67 (TVIIANLLLLIHVVFVVLAFL) traverse the membrane as a helical segment. Topologically, residues 68–89 (TGVPCLYPNPTEDKCPENYTSP) are lumenal. The helical transmembrane segment at 90-110 (LKVQTAIILGKLILWILHLLF) threads the bilayer. Residues 111 to 137 (ERYVQYHHRKVRSRGYSQIYRSTRHLK) lie on the Cytoplasmic side of the membrane. A helical membrane pass occupies residues 138–158 (TLALTIHSSGNTALLLLLCVQ). Residues 159–171 (HSFPEPSKLYLEL) are Lumenal-facing. A helical membrane pass occupies residues 172-192 (ILAVLALELICSLSCLILYIV). Topologically, residues 193–266 (KIRRFNRAKP…LELATQPART (74 aa)) are cytoplasmic. The residue at position 213 (Tyr213) is a Phosphotyrosine. 2 positions are modified to phosphoserine: Ser229 and Ser230.

The protein belongs to the TMEM192 family. As to quaternary structure, homodimer.

It is found in the lysosome membrane. The protein resides in the late endosome. The sequence is that of Transmembrane protein 192 (Tmem192) from Mus musculus (Mouse).